The following is a 1363-amino-acid chain: Spike glycoprotein (1363 aa).

Residues 1–13 (MFLILLISLPTAF) form the signal peptide. Over 14 to 1307 (AVIGDLKCTT…GTYEYYVKWP (1294 aa)) the chain is Extracellular. One can recognise a BetaCoV S1-NTD domain in the interval 15–298 (VIGDLKCTTV…DFMSEIKCKT (284 aa)). 5 disulfide bridges follow: cysteine 21-cysteine 165, cysteine 160-cysteine 193, cysteine 172-cysteine 252, cysteine 286-cysteine 296, and cysteine 331-cysteine 356. N-linked (GlcNAc...) asparagine; by host glycosylation is found at asparagine 59 and asparagine 133. Asparagine 198 carries an N-linked (GlcNAc...) asparagine; by host glycan. A BetaCoV S1-CTD domain is found at 329 to 617 (PDCNIEAWLN…DVNSGTTCST (289 aa)). Asparagine 359 carries N-linked (GlcNAc...) asparagine; by host glycosylation. Cystine bridges form between cysteine 374–cysteine 427 and cysteine 386–cysteine 615. N-linked (GlcNAc...) asparagine; by host glycans are attached at residues asparagine 437, asparagine 649, asparagine 676, asparagine 696, asparagine 714, asparagine 739, and asparagine 788. Fusion peptide stretches follow at residues 914–935 (SAIE…VEAY) and 933–953 (EAYN…VQSY). N-linked (GlcNAc...) asparagine; by host glycosylation is present at asparagine 937. Cysteine 938 and cysteine 949 form a disulfide bridge. The segment at 1014–1064 (QKLIANAFNNALGAIQEGFDATNSALVKIQAVVNANAEALNNLLQQLSNRF) is heptad repeat 1. Residues 1043–1087 (QAVVNANAEALNNLLQQLSNRFGAISSSLQEILSRLDALEAQAQI) adopt a coiled-coil conformation. Residues asparagine 1194, asparagine 1224, asparagine 1234, asparagine 1253, asparagine 1267, and asparagine 1288 are each glycosylated (N-linked (GlcNAc...) asparagine; by host). A heptad repeat 2 region spans residues 1258-1296 (APDLSLDYINVTFLDLQDEMNRLQEAIKVLNQSYINLKD). Residues 1269–1297 (TFLDLQDEMNRLQEAIKVLNQSYINLKDI) are a coiled coil. Residues 1308–1328 (WYVWLLIGFAGVAMLVLLFFI) traverse the membrane as a helical segment. Residues 1329-1363 (CCCTGCGTSCFKKCGGCCDDYTGHQELVIKTSHDD) lie on the Cytoplasmic side of the membrane. The KxHxx signature appears at 1359-1363 (TSHDD).

The protein belongs to the betacoronaviruses spike protein family. Homotrimer; each monomer consists of a S1 and a S2 subunit. The resulting peplomers protrude from the virus surface as spikes. Post-translationally, specific enzymatic cleavages in vivo yield mature proteins. The precursor is processed into S1 and S2 by host cell furin or another cellular protease to yield the mature S1 and S2 proteins. Additionally, a second cleavage leads to the release of a fusion peptide after viral attachment to host cell receptor. In terms of processing, the cytoplasmic Cys-rich domain is palmitoylated. Spike glycoprotein is digested within host endosomes.

It localises to the virion membrane. The protein resides in the host endoplasmic reticulum-Golgi intermediate compartment membrane. The protein localises to the host cell membrane. Its function is as follows. Attaches the virion to the cell membrane by interacting with host receptor, initiating the infection. In terms of biological role, mediates fusion of the virion and cellular membranes by acting as a class I viral fusion protein. Under the current model, the protein has at least three conformational states: pre-fusion native state, pre-hairpin intermediate state, and post-fusion hairpin state. During viral and target cell membrane fusion, the coiled coil regions (heptad repeats) assume a trimer-of-hairpins structure, positioning the fusion peptide in close proximity to the C-terminal region of the ectodomain. The formation of this structure appears to drive apposition and subsequent fusion of viral and target cell membranes. Acts as a viral fusion peptide which is unmasked following S2 cleavage occurring upon virus endocytosis. The polypeptide is Spike glycoprotein (Bovine coronavirus (strain LSU-94LSS-051) (BCoV-LSU)).